The sequence spans 354 residues: Probable calcium-binding protein CML50 (354 aa).

Low complexity-rich tracts occupy residues 1-10 (MSGYPPTSQG) and 28-71 (YSSG…SSYG). The segment at 1–159 (MSGYPPTSQG…PASSGHGGGY (159 aa)) is disordered. Over residues 72–81 (APPPSAPYAP) the composition is skewed to pro residues. Residues 106 to 117 (GSSDYGSYGAGP) are compositionally biased toward low complexity. EF-hand domains follow at residues 183–218 (GTDP…YQQR) and 249–284 (YSLQ…LGFS). D196, D198, S200, E207, D262, D264, S266, R268, and E273 together coordinate Ca(2+).

Functionally, potential calcium sensor. The protein is Probable calcium-binding protein CML50 (CML50) of Arabidopsis thaliana (Mouse-ear cress).